Reading from the N-terminus, the 393-residue chain is Protein TsgA (393 aa).

12 helical membrane passes run 11-31 (WISF…GMVM), 51-71 (FLNA…EIVP), 78-98 (FGFI…SLAL), 101-121 (AAMF…TFLI), 134-154 (LLFT…VAAF), 162-182 (WYWV…LTFG), 206-226 (IGVL…LGFI), 245-265 (ALVS…SFIL), 273-293 (ILTV…TGTQ), 298-318 (WFIL…ITLG), 332-352 (FILT…GPIV), and 361-381 (LLTA…LGFV).

It belongs to the major facilitator superfamily. TsgA family.

The protein localises to the cell inner membrane. In Salmonella gallinarum (strain 287/91 / NCTC 13346), this protein is Protein TsgA.